The sequence spans 172 residues: Trypsin inhibitor DE-3 (172 aa).

2 disulfides stabilise this stretch: Cys39/Cys83 and Cys132/Cys139.

Belongs to the protease inhibitor I3 (leguminous Kunitz-type inhibitor) family.

Functionally, inhibition of trypsin. This is Trypsin inhibitor DE-3 from Erythrina variegata (Indian coral tree).